Here is a 351-residue protein sequence, read N- to C-terminus: Methionine import ATP-binding protein MetN (351 aa).

In terms of domain architecture, ABC transporter spans 2 to 247 (ITTSGLTKVY…PGSELAAALF (246 aa)). Residue 38–45 (GQSGAGKS) participates in ATP binding.

Belongs to the ABC transporter superfamily. Methionine importer (TC 3.A.1.24) family. As to quaternary structure, the complex is composed of two ATP-binding proteins (MetN), two transmembrane proteins (MetI) and a solute-binding protein (MetQ).

The protein localises to the cell membrane. The enzyme catalyses L-methionine(out) + ATP + H2O = L-methionine(in) + ADP + phosphate + H(+). The catalysed reaction is D-methionine(out) + ATP + H2O = D-methionine(in) + ADP + phosphate + H(+). Its function is as follows. Part of the ABC transporter complex MetNIQ involved in methionine import. Responsible for energy coupling to the transport system. The polypeptide is Methionine import ATP-binding protein MetN (Streptomyces coelicolor (strain ATCC BAA-471 / A3(2) / M145)).